Reading from the N-terminus, the 258-residue chain is Thiazole synthase 1 (258 aa).

The active-site Schiff-base intermediate with DXP is Lys97. Residues Gly158, 184–185 (AG), and 206–207 (NT) each bind 1-deoxy-D-xylulose 5-phosphate.

This sequence belongs to the ThiG family. Homotetramer. Forms heterodimers with either ThiH or ThiS.

It localises to the cytoplasm. The catalysed reaction is [ThiS sulfur-carrier protein]-C-terminal-Gly-aminoethanethioate + 2-iminoacetate + 1-deoxy-D-xylulose 5-phosphate = [ThiS sulfur-carrier protein]-C-terminal Gly-Gly + 2-[(2R,5Z)-2-carboxy-4-methylthiazol-5(2H)-ylidene]ethyl phosphate + 2 H2O + H(+). It participates in cofactor biosynthesis; thiamine diphosphate biosynthesis. Catalyzes the rearrangement of 1-deoxy-D-xylulose 5-phosphate (DXP) to produce the thiazole phosphate moiety of thiamine. Sulfur is provided by the thiocarboxylate moiety of the carrier protein ThiS. In vitro, sulfur can be provided by H(2)S. The sequence is that of Thiazole synthase 1 from Syntrophotalea carbinolica (strain DSM 2380 / NBRC 103641 / GraBd1) (Pelobacter carbinolicus).